A 570-amino-acid chain; its full sequence is Proline--tRNA ligase (570 aa).

This sequence belongs to the class-II aminoacyl-tRNA synthetase family. ProS type 1 subfamily. In terms of assembly, homodimer.

It localises to the cytoplasm. It carries out the reaction tRNA(Pro) + L-proline + ATP = L-prolyl-tRNA(Pro) + AMP + diphosphate. Its function is as follows. Catalyzes the attachment of proline to tRNA(Pro) in a two-step reaction: proline is first activated by ATP to form Pro-AMP and then transferred to the acceptor end of tRNA(Pro). As ProRS can inadvertently accommodate and process non-cognate amino acids such as alanine and cysteine, to avoid such errors it has two additional distinct editing activities against alanine. One activity is designated as 'pretransfer' editing and involves the tRNA(Pro)-independent hydrolysis of activated Ala-AMP. The other activity is designated 'posttransfer' editing and involves deacylation of mischarged Ala-tRNA(Pro). The misacylated Cys-tRNA(Pro) is not edited by ProRS. The sequence is that of Proline--tRNA ligase from Neisseria meningitidis serogroup A / serotype 4A (strain DSM 15465 / Z2491).